Here is a 148-residue protein sequence, read N- to C-terminus: Cytochrome c oxidase subunit 4, mitochondrial (148 aa).

A mitochondrion-targeting transit peptide spans 1 to 24 (MFALRSIRSATKAFQTTSIVSQRG).

As to quaternary structure, slime mold cytochrome c oxidase consists of at least seven different polypeptides species, subunits I, II, III, IV, V, VI, and VIIe/s in order of MW.

It localises to the mitochondrion inner membrane. The catalysed reaction is 4 Fe(II)-[cytochrome c] + O2 + 8 H(+)(in) = 4 Fe(III)-[cytochrome c] + 2 H2O + 4 H(+)(out). Its function is as follows. This protein is one of the nuclear-coded polypeptide chains of cytochrome c oxidase, the terminal oxidase in mitochondrial electron transport. This is Cytochrome c oxidase subunit 4, mitochondrial (cxdA) from Dictyostelium discoideum (Social amoeba).